The primary structure comprises 251 residues: Pyrroloquinoline-quinone synthase (251 aa).

It belongs to the PqqC family.

The enzyme catalyses 6-(2-amino-2-carboxyethyl)-7,8-dioxo-1,2,3,4,7,8-hexahydroquinoline-2,4-dicarboxylate + 3 O2 = pyrroloquinoline quinone + 2 H2O2 + 2 H2O + H(+). Its pathway is cofactor biosynthesis; pyrroloquinoline quinone biosynthesis. Functionally, ring cyclization and eight-electron oxidation of 3a-(2-amino-2-carboxyethyl)-4,5-dioxo-4,5,6,7,8,9-hexahydroquinoline-7,9-dicarboxylic-acid to PQQ. This is Pyrroloquinoline-quinone synthase from Klebsiella pneumoniae (strain 342).